Here is a 532-residue protein sequence, read N- to C-terminus: Protein FAM227B (532 aa).

A coiled-coil region spans residues 432–482 (DNKKDFKRVKQRIKDDIKFLREQQELIDKELDRIQAKASKNLQEVKNEFEN). The interval 494 to 532 (KEEYGGSTSASESPQSMQSPQSSSSFPTISEDFNNVEEG) is disordered. Low complexity predominate over residues 500–523 (STSASESPQSMQSPQSSSSFPTIS).

This sequence belongs to the FAM227 family.

The polypeptide is Protein FAM227B (Fam227b) (Mus musculus (Mouse)).